A 172-amino-acid polypeptide reads, in one-letter code: Histone H1-like protein HC2 (172 aa).

The segment at 1–77 is disordered; the sequence is MIGAQKKQSG…TVAKKPAVKK (77 aa). The segment covering 8–77 has biased composition (basic residues); that stretch reads QSGKKTASRA…TVAKKPAVKK (70 aa).

This sequence belongs to the histone H1/H5 family. HCT subfamily.

Might have a role in establishing the nucleoid structure of elementary bodies. This Chlamydia pneumoniae (Chlamydophila pneumoniae) protein is Histone H1-like protein HC2 (hctB).